Here is a 100-residue protein sequence, read N- to C-terminus: NADH-quinone oxidoreductase subunit K (100 aa).

3 consecutive transmembrane segments (helical) span residues 4 to 24, 28 to 48, and 60 to 80; these read LSHG…SLVM, ILFM…ALVV, and IMYI…LALL.

This sequence belongs to the complex I subunit 4L family. NDH-1 is composed of 13 different subunits. Subunits NuoA, H, J, K, L, M, N constitute the membrane sector of the complex.

The protein resides in the cell membrane. The catalysed reaction is a quinone + NADH + 5 H(+)(in) = a quinol + NAD(+) + 4 H(+)(out). Its function is as follows. NDH-1 shuttles electrons from NADH, via FMN and iron-sulfur (Fe-S) centers, to quinones in the respiratory chain. The immediate electron acceptor for the enzyme in this species is believed to be ubiquinone. Couples the redox reaction to proton translocation (for every two electrons transferred, four hydrogen ions are translocated across the cytoplasmic membrane), and thus conserves the redox energy in a proton gradient. In Buchnera aphidicola subsp. Baizongia pistaciae (strain Bp), this protein is NADH-quinone oxidoreductase subunit K.